Here is a 139-residue protein sequence, read N- to C-terminus: Putative pre-16S rRNA nuclease (139 aa).

This sequence belongs to the YqgF nuclease family.

It is found in the cytoplasm. Could be a nuclease involved in processing of the 5'-end of pre-16S rRNA. The polypeptide is Putative pre-16S rRNA nuclease (Streptococcus equi subsp. equi (strain 4047)).